The following is a 38-amino-acid chain: Large ribosomal subunit protein bL36 (38 aa).

The protein belongs to the bacterial ribosomal protein bL36 family.

This is Large ribosomal subunit protein bL36 from Prosthecochloris aestuarii (strain DSM 271 / SK 413).